The chain runs to 446 residues: WD repeat domain phosphoinositide-interacting protein 1 (446 aa).

Positions 131 to 136 match the Nuclear receptor interaction motif; sequence LLKTVL. A WD 1 repeat occupies 184 to 224; it reads AHEGTLAAITFNSSGSKLASASEKGTVIRVFSVPEGQKLYE. The short motif at 225 to 228 is the L/FRRG motif element; that stretch reads FRRG. WD repeat units lie at residues 230–269 and 312–351; these read KRYV…DSRP and SGQK…GGEC. The interval 386–406 is disordered; it reads ARPSTSAASTVPGYSEDGGAL.

It belongs to the WD repeat PROPPIN family. As to quaternary structure, interacts with androgen receptor (AR) and the estrogen receptors ESR1 and ESR2. Interacts with WIPI2. Interacts with WDR45. Interacts with ATG16L1. May interact with NUDC.

Its subcellular location is the golgi apparatus. The protein localises to the trans-Golgi network. It localises to the endosome. It is found in the cytoplasmic vesicle. The protein resides in the clathrin-coated vesicle. Its subcellular location is the preautophagosomal structure membrane. The protein localises to the cytoplasm. It localises to the cytoskeleton. In terms of biological role, component of the autophagy machinery that controls the major intracellular degradation process by which cytoplasmic materials are packaged into autophagosomes and delivered to lysosomes for degradation. Plays an important role in starvation- and calcium-mediated autophagy, as well as in mitophagy. Functions downstream of the ULK1 and PI3-kinases that produce phosphatidylinositol 3-phosphate (PtdIns3P) on membranes of the endoplasmic reticulum once activated. Binds phosphatidylinositol 3-phosphate (PtdIns3P), and maybe other phosphoinositides including PtdIns3,5P2 and PtdIns5P, and is recruited to phagophore assembly sites at the endoplasmic reticulum membranes. There, it assists WIPI2 in the recruitment of ATG12-ATG5-ATG16L1, a complex that directly controls the elongation of the nascent autophagosomal membrane. Together with WDR45/WIPI4, promotes ATG2 (ATG2A or ATG2B)-mediated lipid transfer by enhancing ATG2-association with phosphatidylinositol 3-monophosphate (PI3P)-containing membranes. Involved in xenophagy of Staphylococcus aureus. Invading S.aureus cells become entrapped in autophagosome-like WIPI1 positive vesicles targeted for lysosomal degradation. Also plays a distinct role in controlling the transcription of melanogenic enzymes and melanosome maturation, a process that is distinct from starvation-induced autophagy. May also regulate the trafficking of proteins involved in the mannose-6-phosphate receptor (MPR) recycling pathway. The chain is WD repeat domain phosphoinositide-interacting protein 1 (Wipi1) from Mus musculus (Mouse).